Reading from the N-terminus, the 249-residue chain is 2-C-methyl-D-erythritol 4-phosphate cytidylyltransferase (249 aa).

This sequence belongs to the IspD/TarI cytidylyltransferase family. IspD subfamily.

The enzyme catalyses 2-C-methyl-D-erythritol 4-phosphate + CTP + H(+) = 4-CDP-2-C-methyl-D-erythritol + diphosphate. It participates in isoprenoid biosynthesis; isopentenyl diphosphate biosynthesis via DXP pathway; isopentenyl diphosphate from 1-deoxy-D-xylulose 5-phosphate: step 2/6. Functionally, catalyzes the formation of 4-diphosphocytidyl-2-C-methyl-D-erythritol from CTP and 2-C-methyl-D-erythritol 4-phosphate (MEP). This is 2-C-methyl-D-erythritol 4-phosphate cytidylyltransferase from Thermobifida fusca (strain YX).